Consider the following 285-residue polypeptide: Ribosomal RNA small subunit methyltransferase I (285 aa).

This sequence belongs to the methyltransferase superfamily. RsmI family.

It is found in the cytoplasm. It carries out the reaction cytidine(1402) in 16S rRNA + S-adenosyl-L-methionine = 2'-O-methylcytidine(1402) in 16S rRNA + S-adenosyl-L-homocysteine + H(+). Catalyzes the 2'-O-methylation of the ribose of cytidine 1402 (C1402) in 16S rRNA. The chain is Ribosomal RNA small subunit methyltransferase I from Buchnera aphidicola subsp. Schizaphis graminum (strain Sg).